Here is a 360-residue protein sequence, read N- to C-terminus: Phospho-N-acetylmuramoyl-pentapeptide-transferase (360 aa).

The next 10 helical transmembrane spans lie at 25–45 (RGILGVLTALILALCLGPWMI), 73–93 (TMGGALILSAIAISTLLWADL), 97–117 (YVWTVLAVTLLFGAIGWVDDY), 132–152 (WKYFWQSVFGLGAALFLYMTA), 167–187 (TIEIPLGAAFIVLTYFVIVGS), 199–219 (GLAIMPTVMVGGALGIFCYLS), 236–256 (AGELIVFCGALIGAGLGFLWF), 263–283 (VFMGDVGALALGAALGTIAVI), 288–308 (VVLFIMGGVFVMETLSVMIQV), and 338–358 (VIVRFWIITVVLVLIGLATLK).

It belongs to the glycosyltransferase 4 family. MraY subfamily. It depends on Mg(2+) as a cofactor.

It is found in the cell inner membrane. It catalyses the reaction UDP-N-acetyl-alpha-D-muramoyl-L-alanyl-gamma-D-glutamyl-meso-2,6-diaminopimeloyl-D-alanyl-D-alanine + di-trans,octa-cis-undecaprenyl phosphate = di-trans,octa-cis-undecaprenyl diphospho-N-acetyl-alpha-D-muramoyl-L-alanyl-D-glutamyl-meso-2,6-diaminopimeloyl-D-alanyl-D-alanine + UMP. The protein operates within cell wall biogenesis; peptidoglycan biosynthesis. In terms of biological role, catalyzes the initial step of the lipid cycle reactions in the biosynthesis of the cell wall peptidoglycan: transfers peptidoglycan precursor phospho-MurNAc-pentapeptide from UDP-MurNAc-pentapeptide onto the lipid carrier undecaprenyl phosphate, yielding undecaprenyl-pyrophosphoryl-MurNAc-pentapeptide, known as lipid I. The protein is Phospho-N-acetylmuramoyl-pentapeptide-transferase of Azotobacter vinelandii (strain DJ / ATCC BAA-1303).